The following is a 501-amino-acid chain: Beta-glucosidase 25 (501 aa).

A signal peptide spans 1-19 (MSLLTLVHILVSFSACVEA). Gln39 serves as a coordination point for a beta-D-glucoside. N-linked (GlcNAc...) asparagine glycosylation occurs at Asn107. A beta-D-glucoside-binding positions include His140 and 185-186 (NE). Glu186 (proton donor) is an active-site residue. Cys205 and Cys213 are disulfide-bonded. Residues Tyr329, Glu402, Trp452, 459-460 (EW), and Phe468 contribute to the a beta-D-glucoside site. Catalysis depends on Glu402, which acts as the Nucleophile. Asn478 carries an N-linked (GlcNAc...) asparagine glycan.

It belongs to the glycosyl hydrolase 1 family.

It catalyses the reaction Hydrolysis of terminal, non-reducing beta-D-glucosyl residues with release of beta-D-glucose.. In Oryza sativa subsp. japonica (Rice), this protein is Beta-glucosidase 25 (BGLU25).